The chain runs to 497 residues: Probable polyamine oxidase 4 (497 aa).

Positions 58, 66, 247, and 435 each coordinate FAD. The Microbody targeting signal motif lies at 495 to 497 (SRM).

The protein belongs to the flavin monoamine oxidase family. Requires FAD as cofactor. Highly expressed in roots, flowers and greening cotelydons. Lower expression in other tissues.

The protein resides in the peroxisome. It carries out the reaction spermine + O2 + H2O = 3-aminopropanal + spermidine + H2O2. The enzyme catalyses spermidine + O2 + H2O = 3-aminopropanal + putrescine + H2O2. It participates in amine and polyamine degradation; spermine degradation. It functions in the pathway amine and polyamine degradation; spermidine degradation. In terms of biological role, flavoenzyme involved in polyamine back-conversion. Catalyzes the oxidation of the secondary amino group of polyamines, such as spermine and spermidine. Substrate preference is spermine &gt; spermidine. No activity detected when putrescine or N(1)-acetylspermine are used as substrates. Plays an important role in the regulation of polyamine intracellular concentration. This chain is Probable polyamine oxidase 4 (PAO4), found in Arabidopsis thaliana (Mouse-ear cress).